Reading from the N-terminus, the 186-residue chain is Ribosome-recycling factor (186 aa).

The protein belongs to the RRF family.

The protein localises to the cytoplasm. Functionally, responsible for the release of ribosomes from messenger RNA at the termination of protein biosynthesis. May increase the efficiency of translation by recycling ribosomes from one round of translation to another. The chain is Ribosome-recycling factor from Paraburkholderia xenovorans (strain LB400).